The sequence spans 172 residues: uncharacterized protein (172 aa).

Residues 22–64 (RSVSSSPAAKQPAPGTVAQSFPPGELALRDETGGRGRGTRGIR) form a disordered region.

This is an uncharacterized protein from Human cytomegalovirus (strain AD169) (HHV-5).